Reading from the N-terminus, the 103-residue chain is Small ribosomal subunit protein uS10 (103 aa).

It belongs to the universal ribosomal protein uS10 family. Part of the 30S ribosomal subunit.

Its function is as follows. Involved in the binding of tRNA to the ribosomes. This chain is Small ribosomal subunit protein uS10, found in Chlorobaculum tepidum (strain ATCC 49652 / DSM 12025 / NBRC 103806 / TLS) (Chlorobium tepidum).